The chain runs to 252 residues: MILAVDIGNTTTEIGYIKDLDKIETLKFKTDHGKTIDDWLINFSFFLNFYNLDETNINKIYISSVVPQVEEKITKALEKLLNVNPLLIGTDVKVPLKINYENPSEVGADRILNAFASINILNPPLIAIDFGTAVTFDVVNKNSEYDGGLIFPGLESSVNCLFSKTAKLPKVKIEKPSNIVGKNTISSIQSGIYNGYISLVEGVISKIEDEYKCKFNIILTGGHGKIISESLNLQHVFEQYLPIKGIYFLDKY.

Residue 6 to 13 participates in ATP binding; sequence DIGNTTTE. Substrate is bound by residues tyrosine 100 and 107-110; that span reads GADR. Residue aspartate 109 is the Proton acceptor of the active site. Aspartate 129 serves as a coordination point for K(+). Threonine 132 provides a ligand contact to ATP. Threonine 184 serves as a coordination point for substrate.

Belongs to the type III pantothenate kinase family. As to quaternary structure, homodimer. Requires NH4(+) as cofactor. It depends on K(+) as a cofactor.

Its subcellular location is the cytoplasm. It carries out the reaction (R)-pantothenate + ATP = (R)-4'-phosphopantothenate + ADP + H(+). It participates in cofactor biosynthesis; coenzyme A biosynthesis; CoA from (R)-pantothenate: step 1/5. Its function is as follows. Catalyzes the phosphorylation of pantothenate (Pan), the first step in CoA biosynthesis. This is Type III pantothenate kinase from Sulfurihydrogenibium sp. (strain YO3AOP1).